The following is a 289-amino-acid chain: F-actin-capping protein subunit beta (289 aa).

Residues 73–110 (RSPWSNQFDPPLEGGNQGGSGGDGEGDGGEGGAAGSIM) are disordered. Positions 87 to 106 (GNQGGSGGDGEGDGGEGGAA) are enriched in gly residues.

This sequence belongs to the F-actin-capping protein beta subunit family. Component of the F-actin capping complex, composed of a heterodimer of an alpha and a beta subunit.

The protein resides in the cytoplasm. Its subcellular location is the cytoskeleton. It is found in the actin patch. Its function is as follows. F-actin-capping proteins bind in a Ca(2+)-independent manner to the fast growing ends of actin filaments (barbed end) thereby blocking the exchange of subunits at these ends. Unlike other capping proteins (such as gelsolin and severin), these proteins do not sever actin filaments. This is F-actin-capping protein subunit beta (fac-2) from Neurospora crassa (strain ATCC 24698 / 74-OR23-1A / CBS 708.71 / DSM 1257 / FGSC 987).